A 43-amino-acid polypeptide reads, in one-letter code: Protein PsbN (43 aa).

A helical membrane pass occupies residues Asn-5–Phe-27.

This sequence belongs to the PsbN family.

It is found in the plastid. The protein resides in the chloroplast thylakoid membrane. Functionally, may play a role in photosystem I and II biogenesis. The protein is Protein PsbN of Gnetum gnemon (Spanish joint-fir).